Reading from the N-terminus, the 833-residue chain is MNNAANTGTTNESNVSDAPRIEPLPSLNDDDIEKILQPNDIFTTDRTDASTTSSTAIEDIINPSLDPQSAASPVPSSSFFHDSRKPSTSTHLVRRGTPLGIYQTNLYGHNSRENTNPNSTLLSSKLLAHPPVPYGQNPDLLQHAVYRAQPSSGTTNAQPRQTTRRYQSHKSRPAFVNKLWSMLNDDSNTKLIQWAEDGKSFIVTNREEFVHQILPKYFKHSNFASFVRQLNMYGWHKVQDVKSGSIQSSSDDKWQFENENFIRGREDLLEKIIRQKGSSNNHNSPSGNGNPANGSNIPLDNAAGSNNSNNNISSSNSFFNNGHLLQGKTLRLMNEANLGDKNDVTAILGELEQIKYNQIAISKDLLRINKDNELLWQENMMARERHRTQQQALEKMFRFLTSIVPHLDPKMIMDGLGDPKVNNEKLNSANNIGLNRDNTGTIDELKSNDSFINDDRNSFTNATTNARNNMSPNNDDNSIDTASTNTTNRKKNIDENIKNNNDIINDIIFNTNLANNLSNYNSNNNAGSPIRPYKQRYLLKNRANSSTSSENPSLTPFDIESNNDRKISEIPFDDEEEEETDFRPFTSRDPNNQTSENTFDPNRFTMLSDDDLKKDSHTNDNKHNESDLFWDNVHRNIDEQDARLQNLENMVHILSPGYPNKSFNNKTSSTNTNSNMESAVNVNSPGFNLQDYLTGESNSPNSVHSVPSNGSGSTPLPMPNDNDTEHASTSVNQGENGSGLTPFLTVDDHTLNDNNTSEGSTRVSPDIKFSATENTKVSDNLPSFNDHSYSTQADTAPENAKKRFVEEIPEPAIVEIQDPTEYNDHRLPKRAKK.

Methionine 1 is modified (N-acetylmethionine). Residues methionine 1–serine 16 are compositionally biased toward polar residues. Disordered stretches follow at residues methionine 1–aspartate 31 and asparagine 62–leucine 92. The span at serine 69–phenylalanine 80 shows a compositional bias: low complexity. Threonine 97 is subject to Phosphothreonine. The span at proline 150 to glutamine 161 shows a compositional bias: polar residues. Disordered regions lie at residues proline 150–lysine 170 and glycine 277–asparagine 309. A DNA-binding region spans residues lysine 170–glutamate 259. A flexible linker region spans residues asparagine 260 to asparagine 280. Low complexity predominate over residues glycine 277–asparagine 296. Residues glutamate 350–isoleucine 403 form an involved in trimerization region. Over residues serine 447–asparagine 457 the composition is skewed to basic and acidic residues. The disordered stretch occupies residues serine 447–isoleucine 493. Phosphoserine occurs at positions 450, 458, 471, 478, and 528. Residues serine 458 to threonine 487 are compositionally biased toward polar residues. The span at arginine 542–leucine 554 shows a compositional bias: polar residues. Disordered stretches follow at residues arginine 542 to serine 626, glycine 657 to proline 765, and serine 778 to asparagine 799. Residues proline 571 to threonine 580 show a composition bias toward acidic residues. Positions arginine 588 to aspartate 600 are enriched in polar residues. The segment covering aspartate 610 to serine 626 has biased composition (basic and acidic residues). The segment covering asparagine 660–asparagine 675 has biased composition (low complexity). Polar residues predominate over residues methionine 676–phenylalanine 687. Low complexity predominate over residues serine 697–serine 713. Composition is skewed to polar residues over residues alanine 727–glycine 739, asparagine 752–valine 763, and serine 778–aspartate 794.

This sequence belongs to the HSF family. Homotrimer. Homotrimerization increases the affinity of HSF1 to DNA. Post-translationally, exhibits temperature-dependent phosphorylation that activates the transcriptional capacity.

It localises to the nucleus. DNA-binding transcription factor that specifically binds heat shock promoter elements (HSE) and activates transcription. This Saccharomyces cerevisiae (strain ATCC 204508 / S288c) (Baker's yeast) protein is Heat shock transcription factor.